A 569-amino-acid chain; its full sequence is Rab GTPase-binding effector protein 2 (569 aa).

Disordered stretches follow at residues 1 to 38 (MAAA…AELG), 181 to 267 (QRRP…ASLV), and 388 to 414 (RAEQ…PSSV). The residue at position 2 (alanine 2) is an N-acetylalanine. Low complexity predominate over residues 29–38 (EGANGEAELG). Residues 34-184 (EAELGELSRL…ELIQEIQRRP (151 aa)) are a coiled coil. Residues serine 189, serine 193, serine 200, and serine 204 each carry the phosphoserine modification. Positions 245 to 257 (SSSSLPRSRQGLS) are enriched in low complexity. A coiled-coil region spans residues 292-391 (WEQLQMEGRQ…EENQGLRAEQ (100 aa)). Low complexity predominate over residues 393-403 (PSSAPQGPQQE). The stretch at 423–523 (RTRQEARAQL…LQAELETSEQ (101 aa)) forms a coiled coil.

Belongs to the rabaptin family. In terms of assembly, heterodimer with RABGEF1. The dimer binds RAB5A that has been activated by GTP-binding. Interacts with SDCCAG8; this interaction is important for ciliogenesis regulation. Interacts with RAB4; this interaction may mediate VEGFR2 cell surface expression.

Its subcellular location is the cytoplasm. The protein localises to the early endosome. The protein resides in the cytoskeleton. It localises to the microtubule organizing center. It is found in the centrosome. Its subcellular location is the cilium basal body. In terms of biological role, plays a role in membrane trafficking and in homotypic early endosome fusion. Participates in arteriogenesis by regulating vascular endothelial growth factor receptor 2/VEGFR2 cell surface expression and endosomal trafficking. By interacting with SDCCAG8, localizes to centrosomes and plays a critical role in ciliogenesis. The sequence is that of Rab GTPase-binding effector protein 2 (RABEP2) from Pongo abelii (Sumatran orangutan).